The chain runs to 426 residues: Kynureninase (426 aa).

Residues Leu-110, Ser-111, Phe-138–Asp-141, Asp-223, His-226, and Tyr-248 each bind pyridoxal 5'-phosphate. Position 249 is an N6-(pyridoxal phosphate)lysine (Lys-249). Pyridoxal 5'-phosphate-binding residues include Trp-279 and Asn-307.

This sequence belongs to the kynureninase family. Homodimer. Pyridoxal 5'-phosphate serves as cofactor.

The catalysed reaction is L-kynurenine + H2O = anthranilate + L-alanine + H(+). It carries out the reaction 3-hydroxy-L-kynurenine + H2O = 3-hydroxyanthranilate + L-alanine + H(+). The protein operates within amino-acid degradation; L-kynurenine degradation; L-alanine and anthranilate from L-kynurenine: step 1/1. Its pathway is cofactor biosynthesis; NAD(+) biosynthesis; quinolinate from L-kynurenine: step 2/3. In terms of biological role, catalyzes the cleavage of L-kynurenine (L-Kyn) and L-3-hydroxykynurenine (L-3OHKyn) into anthranilic acid (AA) and 3-hydroxyanthranilic acid (3-OHAA), respectively. This chain is Kynureninase, found in Myxococcus xanthus (strain DK1622).